The sequence spans 158 residues: 2-C-methyl-D-erythritol 2,4-cyclodiphosphate synthase (158 aa).

A divalent metal cation contacts are provided by aspartate 9 and histidine 11. Residues 9 to 11 and 35 to 36 each bind 4-CDP-2-C-methyl-D-erythritol 2-phosphate; these read DVH and HS. Residue histidine 43 participates in a divalent metal cation binding. Residues 57 to 59, 62 to 66, 133 to 136, phenylalanine 140, and arginine 143 contribute to the 4-CDP-2-C-methyl-D-erythritol 2-phosphate site; these read DIG, FPDTD, and TTTE.

Belongs to the IspF family. As to quaternary structure, homotrimer. The cofactor is a divalent metal cation.

It carries out the reaction 4-CDP-2-C-methyl-D-erythritol 2-phosphate = 2-C-methyl-D-erythritol 2,4-cyclic diphosphate + CMP. It participates in isoprenoid biosynthesis; isopentenyl diphosphate biosynthesis via DXP pathway; isopentenyl diphosphate from 1-deoxy-D-xylulose 5-phosphate: step 4/6. In terms of biological role, involved in the biosynthesis of isopentenyl diphosphate (IPP) and dimethylallyl diphosphate (DMAPP), two major building blocks of isoprenoid compounds. Catalyzes the conversion of 4-diphosphocytidyl-2-C-methyl-D-erythritol 2-phosphate (CDP-ME2P) to 2-C-methyl-D-erythritol 2,4-cyclodiphosphate (ME-CPP) with a corresponding release of cytidine 5-monophosphate (CMP). The protein is 2-C-methyl-D-erythritol 2,4-cyclodiphosphate synthase of Haemophilus influenzae (strain PittGG).